Consider the following 318-residue polypeptide: Transcription factor zip-4 (318 aa).

Positions 1–13 (MYNYNYSRGNKSM) are enriched in polar residues. 4 disordered regions span residues 1–20 (MYNY…PRFH), 147–205 (EKKP…TAAA), 238–257 (NNDA…LQKD), and 273–318 (ELQS…KSNY). Residues 173 to 190 (DYQEEGETSLSDNDESVD) show a composition bias toward acidic residues. Residues 228-291 (EPIYKLKRAR…ERDQQLIKQL (64 aa)) form the bZIP domain. The basic motif stretch occupies residues 232-266 (KLKRARNNDAVRKSRNKAKELQLQKDEEYDEMKKR). The stretch at 242-280 (VRKSRNKAKELQLQKDEEYDEMKKRITQLEAELQSEREG) forms a coiled coil. The leucine-zipper stretch occupies residues 267-274 (ITQLEAEL). Over residues 275–298 (QSEREGRERDQQLIKQLIREKEST) the composition is skewed to basic and acidic residues. Over residues 307-318 (RNALESFNKSNY) the composition is skewed to polar residues.

Belongs to the bZIP family. C/EBP subfamily.

It is found in the nucleus. Transcription factor that binds to the promoter and the enhancer regions of target genes. Involved in responding to mitochondrial damage. Has a protective role in response to infection by the Gram-negative bacterium P.aeruginosa. The chain is Transcription factor zip-4 from Caenorhabditis elegans.